The sequence spans 509 residues: L-arabinose isomerase (509 aa).

4 residues coordinate Mn(2+): glutamate 313, glutamate 340, histidine 357, and histidine 456.

It belongs to the arabinose isomerase family. Mn(2+) is required as a cofactor.

The catalysed reaction is beta-L-arabinopyranose = L-ribulose. It functions in the pathway carbohydrate degradation; L-arabinose degradation via L-ribulose; D-xylulose 5-phosphate from L-arabinose (bacterial route): step 1/3. Its function is as follows. Catalyzes the conversion of L-arabinose to L-ribulose. The chain is L-arabinose isomerase from Phocaeicola vulgatus (strain ATCC 8482 / DSM 1447 / JCM 5826 / CCUG 4940 / NBRC 14291 / NCTC 11154) (Bacteroides vulgatus).